We begin with the raw amino-acid sequence, 1070 residues long: DNA-directed RNA polymerase subunit beta (1070 aa).

Belongs to the RNA polymerase beta chain family. As to quaternary structure, in plastids the minimal PEP RNA polymerase catalytic core is composed of four subunits: alpha, beta, beta', and beta''. When a (nuclear-encoded) sigma factor is associated with the core the holoenzyme is formed, which can initiate transcription.

It is found in the plastid. Its subcellular location is the chloroplast. The catalysed reaction is RNA(n) + a ribonucleoside 5'-triphosphate = RNA(n+1) + diphosphate. DNA-dependent RNA polymerase catalyzes the transcription of DNA into RNA using the four ribonucleoside triphosphates as substrates. The sequence is that of DNA-directed RNA polymerase subunit beta from Illicium oligandrum (Star anise).